The primary structure comprises 478 residues: GTPase Obg (478 aa).

Residues 2 to 159 (TTFVDRVELH…QDIHLELKTV (158 aa)) form the Obg domain. Residues 60-88 (YHHSPHRKATNGKPGEGGNRSGKDGQDLV) form a disordered region. Positions 160-330 (ADVALVGYPS…LSFALAELVA (171 aa)) constitute an OBG-type G domain. GTP is bound by residues 166-173 (GYPSAGKS), 191-195 (FTTLV), 212-215 (DVPG), 282-285 (NKID), and 311-313 (SAV). Mg(2+)-binding residues include S173 and T193. The 83-residue stretch at 348 to 430 (PKAVDDAGFT…DNAVVFDWEP (83 aa)) folds into the OCT domain. Positions 438–478 (MLGRRGEDHRFEAPRPAAQRRRDRDAERDEAQQEFDGFEPF) are disordered. Basic and acidic residues-rich tracts occupy residues 439–450 (LGRRGEDHRFEA) and 457–468 (RRRDRDAERDEA). Acidic residues predominate over residues 469–478 (QQEFDGFEPF).

It belongs to the TRAFAC class OBG-HflX-like GTPase superfamily. OBG GTPase family. Monomer. Requires Mg(2+) as cofactor.

It is found in the cytoplasm. Its subcellular location is the cell membrane. Its function is as follows. Plays an unknown essential role and a regulatory role in sporulation. Overexpression suppresses sporulation although cell growth rate was not reduced. Impaired differentiation was eliminated by addition of decoyinine, an inhibitor of GMP synthesis. Overexpression has no effect on undecylprodigiosin production, but decreases actinorhodin production. Functionally, an essential GTPase which binds GTP, GDP and possibly (p)ppGpp with moderate affinity, with high nucleotide exchange rates and a fairly low GTP hydrolysis rate. Plays a role in control of the cell cycle, stress response, ribosome biogenesis and in those bacteria that undergo differentiation, in morphogenesis control. The sequence is that of GTPase Obg from Streptomyces coelicolor (strain ATCC BAA-471 / A3(2) / M145).